The primary structure comprises 563 residues: CTP synthase (563 aa).

Residues 1 to 280 (MTKFVFVTGG…DEMICMKLQL (280 aa)) are amidoligase domain. Ser-13 provides a ligand contact to CTP. UTP is bound at residue Ser-13. Residues 14-19 (SLGKGI) and Asp-71 each bind ATP. 2 residues coordinate Mg(2+): Asp-71 and Glu-154. Residues 161–163 (DIE), 201–206 (KTKPTQ), and Lys-237 contribute to the CTP site. Residues 201-206 (KTKPTQ) and Lys-237 contribute to the UTP site. A Glutamine amidotransferase type-1 domain is found at 305 to 557 (TIAMAGKYTE…IAAALEHHAA (253 aa)). Residue Gly-366 participates in L-glutamine binding. Residue Cys-393 is the Nucleophile; for glutamine hydrolysis of the active site. Residues 394-397 (LGMQ), Glu-417, and Arg-483 each bind L-glutamine. Catalysis depends on residues His-530 and Glu-532.

Belongs to the CTP synthase family. Homotetramer.

It carries out the reaction UTP + L-glutamine + ATP + H2O = CTP + L-glutamate + ADP + phosphate + 2 H(+). The catalysed reaction is L-glutamine + H2O = L-glutamate + NH4(+). It catalyses the reaction UTP + NH4(+) + ATP = CTP + ADP + phosphate + 2 H(+). It functions in the pathway pyrimidine metabolism; CTP biosynthesis via de novo pathway; CTP from UDP: step 2/2. Its activity is regulated as follows. Allosterically activated by GTP, when glutamine is the substrate; GTP has no effect on the reaction when ammonia is the substrate. The allosteric effector GTP functions by stabilizing the protein conformation that binds the tetrahedral intermediate(s) formed during glutamine hydrolysis. Inhibited by the product CTP, via allosteric rather than competitive inhibition. Its function is as follows. Catalyzes the ATP-dependent amination of UTP to CTP with either L-glutamine or ammonia as the source of nitrogen. Regulates intracellular CTP levels through interactions with the four ribonucleotide triphosphates. This Leptothrix cholodnii (strain ATCC 51168 / LMG 8142 / SP-6) (Leptothrix discophora (strain SP-6)) protein is CTP synthase.